The chain runs to 319 residues: Acetyl esterase (319 aa).

Residues 91-93 (HGG) carry the Involved in the stabilization of the negatively charged intermediate by the formation of the oxyanion hole motif. Catalysis depends on residues S165, D262, and H292.

This sequence belongs to the 'GDXG' lipolytic enzyme family. In terms of assembly, homodimer. Interacts with MalT and MelA.

The protein resides in the cytoplasm. Its function is as follows. Displays esterase activity towards short chain fatty esters (acyl chain length of up to 8 carbons). Able to hydrolyze triacetylglycerol (triacetin) and tributyrylglycerol (tributyrin), but not trioleylglycerol (triolein) or cholesterol oleate. Negatively regulates MalT activity by antagonizing maltotriose binding. Inhibits MelA galactosidase activity. In Escherichia coli O127:H6 (strain E2348/69 / EPEC), this protein is Acetyl esterase.